The primary structure comprises 552 residues: CTP synthase (552 aa).

The tract at residues 1 to 270 is amidoligase domain; the sequence is MTKFVFVTGG…DGLICDKLRL (270 aa). S13 serves as a coordination point for CTP. UTP is bound at residue S13. Residues 14 to 19 and D71 contribute to the ATP site; that span reads SLGKGI. Residues D71 and E144 each contribute to the Mg(2+) site. CTP is bound by residues 151–153, 191–196, and K227; these read DIE and KTKPTQ. UTP-binding positions include 191 to 196 and K227; that span reads KTKPTQ. A Glutamine amidotransferase type-1 domain is found at 295-548; it reads QIAMVGKYVE…IKAAVEHQKP (254 aa). An L-glutamine-binding site is contributed by G357. Catalysis depends on C384, which acts as the Nucleophile; for glutamine hydrolysis. L-glutamine-binding positions include 385 to 388, E408, and R474; that span reads LGMQ. Residues H521 and E523 contribute to the active site.

This sequence belongs to the CTP synthase family. As to quaternary structure, homotetramer.

It catalyses the reaction UTP + L-glutamine + ATP + H2O = CTP + L-glutamate + ADP + phosphate + 2 H(+). It carries out the reaction L-glutamine + H2O = L-glutamate + NH4(+). The catalysed reaction is UTP + NH4(+) + ATP = CTP + ADP + phosphate + 2 H(+). The protein operates within pyrimidine metabolism; CTP biosynthesis via de novo pathway; CTP from UDP: step 2/2. Allosterically activated by GTP, when glutamine is the substrate; GTP has no effect on the reaction when ammonia is the substrate. The allosteric effector GTP functions by stabilizing the protein conformation that binds the tetrahedral intermediate(s) formed during glutamine hydrolysis. Inhibited by the product CTP, via allosteric rather than competitive inhibition. In terms of biological role, catalyzes the ATP-dependent amination of UTP to CTP with either L-glutamine or ammonia as the source of nitrogen. Regulates intracellular CTP levels through interactions with the four ribonucleotide triphosphates. This Acidovorax ebreus (strain TPSY) (Diaphorobacter sp. (strain TPSY)) protein is CTP synthase.